The sequence spans 247 residues: 14-3-3 protein gamma (247 aa).

An N-acetylmethionine; in 14-3-3 protein gamma; alternate; partial modification is found at methionine 1. Valine 2 bears the N-acetylvaline; in 14-3-3 protein gamma, N-terminally processed; partial mark. Residue valine 2 is modified to N-acetylvaline; partial. The tract at residues 2-166 (VDREQLVQKA…AHEISKEHMQ (165 aa)) is required for interaction with SPATA18/MIEAP (isoform 2) but dispensable for binding to SPATA18/MIEAP (isoform 1). Residues 2 to 247 (VDREQLVQKA…QDDDGGEGNN (246 aa)) are interaction with SPATA18/MIEAP. Serine 71 carries the post-translational modification Phosphoserine. Tyrosine 133 bears the Phosphotyrosine mark. Threonine 145 bears the Phosphothreonine mark. Serine 215 is modified (phosphoserine). A Phosphothreonine modification is found at threonine 234. Position 235 is a phosphoserine (serine 235).

Belongs to the 14-3-3 family. As to quaternary structure, homodimer. Part of a complex that contains DSG3, PKP1, YAP1 and YWHAG; the complex is required for localization of DSG3 and YAP1 to the cell membrane in keratinocytes. Interacts with SAMSN1. Interacts with RAF1, SSH1 and CRTC2/TORC2. Interacts with ABL1 (phosphorylated form); the interaction retains it in the cytoplasm. Interacts with GAB2. Interacts with MDM4 (phosphorylated); negatively regulates MDM4 activity toward TP53. Interacts with PKA-phosphorylated AANAT and SIRT2. Interacts with the 'Thr-369' phosphorylated form of DAPK2. Interacts with PI4KB, TBC1D22A and TBC1D22B. Interacts with SLITRK1. Interacts with LRRK2; this interaction is dependent on LRRK2 phosphorylation. Interacts with MARK2 and MARK3. Interacts with MEFV. Interacts with ENDOG, TSC2 and PIK3C3; interaction with ENDOG weakens its interaction with TSC2 and PIK3C3. Interacts with (phosphorylated) WDR24. Interacts with BEST1; this interaction promotes L-glutamate channel activity leading to the positive regulation of NMDA glutamate receptor activity through the L-glutamate secretion. Interacts with PKP1 (when phosphorylated); the interaction results in translocation of PKP1 to the cytoplasm and loss of intercellular adhesion in keratinocytes. Interacts with SPATA18/MIEAP (isoforms 1 and 2); a protein that also plays a role in MALM. In terms of processing, phosphorylated by various PKC isozymes. In terms of tissue distribution, highly expressed in brain, skeletal muscle, and heart.

It localises to the cytoplasm. It is found in the cytosol. The protein resides in the mitochondrion matrix. In terms of biological role, adapter protein implicated in the regulation of a large spectrum of both general and specialized signaling pathways. Binds to a large number of partners, usually by recognition of a phosphoserine or phosphothreonine motif. Binding generally results in the modulation of the activity of the binding partner. Promotes inactivation of WDR24 component of the GATOR2 complex by binding to phosphorylated WDR24. Participates in the positive regulation of NMDA glutamate receptor activity by promoting the L-glutamate secretion through interaction with BEST1. Reduces keratinocyte intercellular adhesion, via interacting with PKP1 and sequestering it in the cytoplasm, thereby reducing its incorporation into desmosomes. Plays a role in mitochondrial protein catabolic process (also named MALM) that promotes the degradation of damaged proteins inside mitochondria. This Homo sapiens (Human) protein is 14-3-3 protein gamma.